The sequence spans 461 residues: L-seryl-tRNA(Sec) selenium transferase (461 aa).

Residue Lys291 is modified to N6-(pyridoxal phosphate)lysine.

The protein belongs to the SelA family. It depends on pyridoxal 5'-phosphate as a cofactor.

The protein localises to the cytoplasm. The catalysed reaction is L-seryl-tRNA(Sec) + selenophosphate + H(+) = L-selenocysteinyl-tRNA(Sec) + phosphate. It participates in aminoacyl-tRNA biosynthesis; selenocysteinyl-tRNA(Sec) biosynthesis; selenocysteinyl-tRNA(Sec) from L-seryl-tRNA(Sec) (bacterial route): step 1/1. Converts seryl-tRNA(Sec) to selenocysteinyl-tRNA(Sec) required for selenoprotein biosynthesis. In Caldanaerobacter subterraneus subsp. tengcongensis (strain DSM 15242 / JCM 11007 / NBRC 100824 / MB4) (Thermoanaerobacter tengcongensis), this protein is L-seryl-tRNA(Sec) selenium transferase.